Consider the following 174-residue polypeptide: MINVLAVAGLPGSGKTTVARIIERRGYLYYSLGDVVRAEAERRGLTPDKTAVTMRLERGRKAVIYELLKSVKPGEKVVIDGIRSIEEVEALEEFLGTVFLIYVVASRKVRYQRLTGRGRSDDPLSFSQFLLRDLRELRFGLADLLSRADYIIVNETKSIEELEQEIGKVLLELR.

Residue 9-16 (GLPGSGKT) participates in ATP binding.

Belongs to the UPF0200 family.

This Pyrobaculum aerophilum (strain ATCC 51768 / DSM 7523 / JCM 9630 / CIP 104966 / NBRC 100827 / IM2) protein is UPF0200 protein PAE1629.